The following is a 241-amino-acid chain: ATP synthase subunit a (241 aa).

A run of 5 helical transmembrane segments spans residues G30 to G50, F91 to W111, I128 to S148, L193 to L213, and G214 to G234.

Belongs to the ATPase A chain family. In terms of assembly, F-type ATPases have 2 components, CF(1) - the catalytic core - and CF(0) - the membrane proton channel. CF(1) has five subunits: alpha(3), beta(3), gamma(1), delta(1), epsilon(1). CF(0) has four main subunits: a, b, b' and c.

The protein resides in the cellular thylakoid membrane. Its function is as follows. Key component of the proton channel; it plays a direct role in the translocation of protons across the membrane. In Prochlorococcus marinus (strain MIT 9301), this protein is ATP synthase subunit a.